The chain runs to 249 residues: Kallikrein-7 (249 aa).

The signal sequence occupies residues 1–21 (MGVWLLSLITVLLSLALETAG). A propeptide spans 22 to 25 (QGER) (activation peptide). The serine protease stretch occupies residues 26 to 246 (IIDGYKCKEG…YKRWVMETMK (221 aa)). Intrachain disulfides connect cysteine 32-cysteine 161, cysteine 51-cysteine 67, cysteine 133-cysteine 235, cysteine 140-cysteine 207, cysteine 172-cysteine 186, and cysteine 197-cysteine 222. Active-site charge relay system residues include histidine 66 and aspartate 108. Serine 201 serves as the catalytic Charge relay system.

Belongs to the peptidase S1 family. Kallikrein subfamily. In terms of tissue distribution, expressed in skin and, at lower levels, in lung, kidney, brain, heart and spleen. In skin, expressed in high suprabasal keratinocytes and in the luminal parts of hair follicles. Not detected in liver and skeletal muscle.

It localises to the secreted. The enzyme catalyses Cleavage of proteins with aromatic side chains in the P1 position.. With respect to regulation, inhibited by Zn2+ and Cu2+ at low micromolar concentrations. Inhibited by SERPINA12. Its function is as follows. May catalyze the degradation of intercellular cohesive structures in the cornified layer of the skin in the continuous shedding of cells from the skin surface. Specific for amino acid residues with aromatic side chains in the P1 position. Cleaves insulin A chain at '14-Tyr-|-Gln-15' and insulin B chain at '6-Leu-|-Cys-7', '16-Tyr-|-Leu-17', '25-Phe-|-Tyr-26' and '26-Tyr-|-Thr-27'. Could play a role in the activation of precursors to inflammatory cytokines. In Mus musculus (Mouse), this protein is Kallikrein-7 (Klk7).